The primary structure comprises 349 residues: GDP-mannose:glycolipid 4-beta-D-mannosyltransferase (349 aa).

A signal peptide spans 1 to 14 (MSASASLPVTRAAA).

This sequence belongs to the glycosyltransferase 94 family.

Its subcellular location is the cell inner membrane. The catalysed reaction is beta-D-GlcA-(1-&gt;2)-alpha-D-Man-(1-&gt;3)-beta-D-Glc-(1-&gt;4)-alpha-D-Glc-di-trans,octa-cis-undecaprenyl diphosphate + GDP-alpha-D-mannose = beta-D-Man-(1-&gt;4)-beta-D-GlcA-(1-&gt;2)-alpha-D-Man-(1-&gt;3)-beta-D-Glc-(1-&gt;4)-alpha-D-Glc-di-trans,octa-cis-undecaprenyl diphosphate + GDP + H(+). Its pathway is glycan biosynthesis; xanthan biosynthesis. Its function is as follows. Nonprocessive beta-mannosyltransferase that catalyzes the transfer of a mannose residue from GDP-mannose to glucuronic acid-beta-1,2-mannose-alpha-1,3-glucose-beta-1,4-glucose-PP-polyisoprenyl to form the lipid-linked pentasaccharide repeating unit of xanthan, Man-GlcA-Man-Glc(2)-PP-Pol. Is involved in the biosynthesis of the exopolysaccharide xanthan. To a lesser extent, can also use ADP-Man and even GDP-Glc as sugar donor substrates in vitro. Is unable to transfer a Man residue to the free-tetrasaccharide GlcA-Man-Glc(2) used as an acceptor, which indicates that the diphosphate group and the lipid moiety in the acceptor substrate are of major importance for acceptor binding and catalysis. This chain is GDP-mannose:glycolipid 4-beta-D-mannosyltransferase (gumI), found in Xanthomonas campestris pv. campestris.